The following is a 104-amino-acid chain: Large ribosomal subunit protein uL23 (104 aa).

It belongs to the universal ribosomal protein uL23 family. As to quaternary structure, part of the 50S ribosomal subunit. Contacts protein L29, and trigger factor when it is bound to the ribosome.

In terms of biological role, one of the early assembly proteins it binds 23S rRNA. One of the proteins that surrounds the polypeptide exit tunnel on the outside of the ribosome. Forms the main docking site for trigger factor binding to the ribosome. This Polynucleobacter necessarius subsp. necessarius (strain STIR1) protein is Large ribosomal subunit protein uL23.